The chain runs to 127 residues: Large ribosomal subunit protein bL12 (127 aa).

This sequence belongs to the bacterial ribosomal protein bL12 family. Homodimer. Part of the ribosomal stalk of the 50S ribosomal subunit. Forms a multimeric L10(L12)X complex, where L10 forms an elongated spine to which 2 to 4 L12 dimers bind in a sequential fashion. Binds GTP-bound translation factors.

Functionally, forms part of the ribosomal stalk which helps the ribosome interact with GTP-bound translation factors. Is thus essential for accurate translation. In Syntrophotalea carbinolica (strain DSM 2380 / NBRC 103641 / GraBd1) (Pelobacter carbinolicus), this protein is Large ribosomal subunit protein bL12.